The chain runs to 424 residues: Kynureninase (424 aa).

Pyridoxal 5'-phosphate-binding positions include Leu109, Thr110, 137–140, Asp222, His225, and Tyr247; that span reads FPSD. Lys248 carries the post-translational modification N6-(pyridoxal phosphate)lysine. Trp278 and Asn306 together coordinate pyridoxal 5'-phosphate.

The protein belongs to the kynureninase family. Homodimer. It depends on pyridoxal 5'-phosphate as a cofactor.

It carries out the reaction L-kynurenine + H2O = anthranilate + L-alanine + H(+). The catalysed reaction is 3-hydroxy-L-kynurenine + H2O = 3-hydroxyanthranilate + L-alanine + H(+). The protein operates within amino-acid degradation; L-kynurenine degradation; L-alanine and anthranilate from L-kynurenine: step 1/1. Its pathway is cofactor biosynthesis; NAD(+) biosynthesis; quinolinate from L-kynurenine: step 2/3. In terms of biological role, catalyzes the cleavage of L-kynurenine (L-Kyn) and L-3-hydroxykynurenine (L-3OHKyn) into anthranilic acid (AA) and 3-hydroxyanthranilic acid (3-OHAA), respectively. The sequence is that of Kynureninase from Koribacter versatilis (strain Ellin345).